A 96-amino-acid polypeptide reads, in one-letter code: UPF0251 protein Spea_3639 (96 aa).

This sequence belongs to the UPF0251 family.

The chain is UPF0251 protein Spea_3639 from Shewanella pealeana (strain ATCC 700345 / ANG-SQ1).